The sequence spans 374 residues: Chaperone protein DnaJ (374 aa).

A J domain is found at Ser-4 to Gly-69. Residues Gly-136–Lys-213 form a CR-type zinc finger. Residues Cys-149, Cys-152, Cys-165, Cys-168, Cys-187, Cys-190, Cys-201, and Cys-204 each contribute to the Zn(2+) site. CXXCXGXG motif repeat units follow at residues Cys-149–Gly-156, Cys-165–Gly-172, Cys-187–Gly-194, and Cys-201–Gly-208.

Belongs to the DnaJ family. In terms of assembly, homodimer. Zn(2+) is required as a cofactor.

It is found in the cytoplasm. Participates actively in the response to hyperosmotic and heat shock by preventing the aggregation of stress-denatured proteins and by disaggregating proteins, also in an autonomous, DnaK-independent fashion. Unfolded proteins bind initially to DnaJ; upon interaction with the DnaJ-bound protein, DnaK hydrolyzes its bound ATP, resulting in the formation of a stable complex. GrpE releases ADP from DnaK; ATP binding to DnaK triggers the release of the substrate protein, thus completing the reaction cycle. Several rounds of ATP-dependent interactions between DnaJ, DnaK and GrpE are required for fully efficient folding. Also involved, together with DnaK and GrpE, in the DNA replication of plasmids through activation of initiation proteins. This is Chaperone protein DnaJ from Campylobacter jejuni subsp. doylei (strain ATCC BAA-1458 / RM4099 / 269.97).